Reading from the N-terminus, the 112-residue chain is Conotoxin vil14.4 (112 aa).

A signal peptide spans 1–22; sequence MGFRVLVLVVMATTSALPFTFF. Positions 23-85 are excised as a propeptide; the sequence is EEPGRSPFRP…FAELSVGQRR (63 aa). Cystine bridges form between C91–C111 and C95–C107.

The protein belongs to the conotoxin R superfamily. In terms of tissue distribution, expressed by the venom duct.

It localises to the secreted. This chain is Conotoxin vil14.4, found in Conus villepinii (Villepin's cone).